The sequence spans 450 residues: Deoxyguanosinetriphosphate triphosphohydrolase-like protein (450 aa).

The HD domain maps to 61-274 (RLTHSLEVAQ…MELADDIAYA (214 aa)).

Belongs to the dGTPase family. Type 2 subfamily.

This is Deoxyguanosinetriphosphate triphosphohydrolase-like protein from Histophilus somni (strain 2336) (Haemophilus somnus).